We begin with the raw amino-acid sequence, 169 residues long: Large ribosomal subunit protein uL5 (169 aa).

It belongs to the universal ribosomal protein uL5 family. Part of the 50S ribosomal subunit; contacts the 5S rRNA and probably tRNA. Forms a bridge to the 30S subunit in the 70S ribosome.

Functionally, this is one of the proteins that bind and probably mediate the attachment of the 5S RNA into the large ribosomal subunit, where it forms part of the central protuberance. In the 70S ribosome it contacts protein S13 of the 30S subunit (bridge B1b), connecting the 2 subunits; this bridge is implicated in subunit movement. May contact the P site tRNA; the 5S rRNA and some of its associated proteins might help stabilize positioning of ribosome-bound tRNAs. In Methanosarcina mazei (strain ATCC BAA-159 / DSM 3647 / Goe1 / Go1 / JCM 11833 / OCM 88) (Methanosarcina frisia), this protein is Large ribosomal subunit protein uL5.